The chain runs to 34 residues: Photosystem II reaction center protein Psb30 (34 aa).

Residues 7–27 form a helical membrane-spanning segment; sequence VAQLLALFVIITSGPAIIILI.

This sequence belongs to the Psb30/Ycf12 family. PSII is composed of 1 copy each of membrane proteins PsbA, PsbB, PsbC, PsbD, PsbE, PsbF, PsbH, PsbI, PsbJ, PsbK, PsbL, PsbM, PsbT, PsbX, PsbY, PsbZ, Psb30/Ycf12, peripheral proteins of the oxygen-evolving complex and a large number of cofactors. It forms dimeric complexes.

The protein resides in the plastid. Its subcellular location is the chloroplast thylakoid membrane. In terms of biological role, a core subunit of photosystem II (PSII), probably helps stabilize the reaction center. The chain is Photosystem II reaction center protein Psb30 from Guillardia theta (Cryptophyte).